Consider the following 259-residue polypeptide: Uridylate kinase (259 aa).

21-24 (KLSG) provides a ligand contact to ATP. Position 63 (Gly-63) interacts with UMP. ATP-binding residues include Gly-64 and Arg-68. Residues Asp-83 and 144–151 (TGNPYFTT) contribute to the UMP site. ATP is bound by residues Thr-171, Phe-177, and Asp-180.

This sequence belongs to the UMP kinase family. As to quaternary structure, homohexamer.

It is found in the cytoplasm. It carries out the reaction UMP + ATP = UDP + ADP. Its pathway is pyrimidine metabolism; CTP biosynthesis via de novo pathway; UDP from UMP (UMPK route): step 1/1. Its activity is regulated as follows. Inhibited by UTP. In terms of biological role, catalyzes the reversible phosphorylation of UMP to UDP. This chain is Uridylate kinase, found in Salinibacter ruber (strain DSM 13855 / M31).